The primary structure comprises 874 residues: Alanine--tRNA ligase (874 aa).

4 residues coordinate Zn(2+): H564, H568, C665, and H669.

The protein belongs to the class-II aminoacyl-tRNA synthetase family. Zn(2+) is required as a cofactor.

The protein resides in the cytoplasm. It catalyses the reaction tRNA(Ala) + L-alanine + ATP = L-alanyl-tRNA(Ala) + AMP + diphosphate. Functionally, catalyzes the attachment of alanine to tRNA(Ala) in a two-step reaction: alanine is first activated by ATP to form Ala-AMP and then transferred to the acceptor end of tRNA(Ala). Also edits incorrectly charged Ser-tRNA(Ala) and Gly-tRNA(Ala) via its editing domain. This is Alanine--tRNA ligase from Burkholderia lata (strain ATCC 17760 / DSM 23089 / LMG 22485 / NCIMB 9086 / R18194 / 383).